A 262-amino-acid polypeptide reads, in one-letter code: Apolipoprotein A-I-1 (262 aa).

An N-terminal signal peptide occupies residues 1 to 18 (MKFLALALTILLAAGTQA). The interval 32-63 (VKAALSMYIAQVKLTAQRSIDLLDDTEYKEYK) is 3 X approximate tandem repeats. A run of 2 repeats spans residues 64–85 (MQLT…QSLA) and 87–107 (YSEA…AEVM). Positions 64–262 (MQLTQSLDNL…YETISQAMKA (199 aa)) are 10 X approximate tandem repeats. Residues 108–118 (KDVEELRSQLE) form a 3; half-length repeat. 5 tandem repeats follow at residues 119-140 (PKRA…KKLE), 141-162 (PLIK…AKME), 163-184 (PIVE…TKLM), 185-206 (PIVE…TLAA), and 207-228 (PYAE…EKVS). The 9; half-length repeat unit spans residues 229–239 (PLSEDFKGQVG). Residues 240–262 (PAAEQAKQKLLAFYETISQAMKA) form repeat 10.

The protein belongs to the apolipoprotein A1/A4/E family.

It is found in the secreted. Functionally, participates in the reverse transport of cholesterol from tissues to the liver for excretion by promoting cholesterol efflux from tissues and by acting as a cofactor for the lecithin cholesterol acyltransferase (LCAT). This is Apolipoprotein A-I-1 from Oncorhynchus mykiss (Rainbow trout).